A 247-amino-acid chain; its full sequence is Peptidyl-prolyl cis-trans isomerase FKBP17-2, chloroplastic (247 aa).

The N-terminal 79 residues, 1–79 (MANLFTATAP…SSLTRRFGIG (79 aa)), are a transit peptide targeting the chloroplast. The segment at 26–64 (QCYASSSNPPEPESSSPPPPPPPPQPLASQQKRKKNVET) is disordered. Pro residues predominate over residues 34–51 (PPEPESSSPPPPPPPPQP). In terms of domain architecture, PPIase FKBP-type spans 141-243 (GDLVVIDLKG…EYIVEIDRVS (103 aa)).

This sequence belongs to the FKBP-type PPIase family.

The protein resides in the plastid. Its subcellular location is the chloroplast thylakoid lumen. The catalysed reaction is [protein]-peptidylproline (omega=180) = [protein]-peptidylproline (omega=0). Its function is as follows. PPIases accelerate the folding of proteins. It catalyzes the cis-trans isomerization of proline imidic peptide bonds in oligopeptides. This chain is Peptidyl-prolyl cis-trans isomerase FKBP17-2, chloroplastic (FKBP17-2), found in Arabidopsis thaliana (Mouse-ear cress).